The sequence spans 199 residues: MRSFVLRARAAPTTSKALLEGVGNEAHTEILAHTMMNTMFVAQSHREDVVVHFVLESTKDFSRTITIRSNDITNIGGFHESTLIAAVARALDASVGMGKEQLREVEPGITVRTVSFERLVQELAEDHQLYMLDKKGEFVRDAEIGGNPCFLLTDHIPMPKKSYNSLKRLGTEKISLGPKMLFASQCVVLIHNELDIREF.

S-adenosyl-L-methionine contacts are provided by Leu132 and Cys186.

The protein belongs to the methyltransferase superfamily. TrmY family.

It localises to the cytoplasm. This is Putative pseudouridine methyltransferase from Vibrio campbellii (strain ATCC BAA-1116).